The sequence spans 64 residues: Prokaryotic ubiquitin-like protein Pup (64 aa).

Residues 1–11 show a composition bias toward basic and acidic residues; it reads MAQEQTKRTGG. The disordered stretch occupies residues 1–37; the sequence is MAQEQTKRTGGGDEDDTPGADGAAGQERREKLAEDTD. The interval 21-58 is ARC ATPase binding; it reads DGAAGQERREKLAEDTDDLLDEIDDVLEENAEDFVRAY. Positions 24-52 form a coiled coil; that stretch reads AGQERREKLAEDTDDLLDEIDDVLEENAE. Position 64 is a deamidated glutamine (glutamine 64). An Isoglutamyl lysine isopeptide (Gln-Lys) (interchain with K-? in acceptor proteins) cross-link involves residue glutamine 64.

The protein belongs to the prokaryotic ubiquitin-like protein family. As to quaternary structure, strongly interacts with the proteasome-associated ATPase ARC through a hydrophobic interface; the interacting region of Pup lies in its C-terminal half. There is one Pup binding site per ARC hexamer ring. Post-translationally, is modified by deamidation of its C-terminal glutamine to glutamate by the deamidase Dop, a prerequisite to the subsequent pupylation process.

It participates in protein degradation; proteasomal Pup-dependent pathway. Its function is as follows. Protein modifier that is covalently attached to lysine residues of substrate proteins, thereby targeting them for proteasomal degradation. The tagging system is termed pupylation. In Rhodococcus jostii (strain RHA1), this protein is Prokaryotic ubiquitin-like protein Pup.